Reading from the N-terminus, the 185-residue chain is Ribosome-recycling factor (185 aa).

It belongs to the RRF family.

It localises to the cytoplasm. In terms of biological role, responsible for the release of ribosomes from messenger RNA at the termination of protein biosynthesis. May increase the efficiency of translation by recycling ribosomes from one round of translation to another. This chain is Ribosome-recycling factor, found in Nitrosomonas eutropha (strain DSM 101675 / C91 / Nm57).